The sequence spans 115 residues: NADH-ubiquinone oxidoreductase chain 3 (115 aa).

The next 3 membrane-spanning stretches (helical) occupy residues 4–24 (LTVL…AFWL), 55–75 (FFLV…LLPL), and 87–107 (MMLT…YEWM).

Belongs to the complex I subunit 3 family. Core subunit of respiratory chain NADH dehydrogenase (Complex I) which is composed of 45 different subunits. Interacts with TMEM186. Interacts with TMEM242.

It localises to the mitochondrion inner membrane. It catalyses the reaction a ubiquinone + NADH + 5 H(+)(in) = a ubiquinol + NAD(+) + 4 H(+)(out). Core subunit of the mitochondrial membrane respiratory chain NADH dehydrogenase (Complex I) which catalyzes electron transfer from NADH through the respiratory chain, using ubiquinone as an electron acceptor. Essential for the catalytic activity of complex I. In Peromyscus slevini (Slevin's mouse), this protein is NADH-ubiquinone oxidoreductase chain 3.